Here is a 299-residue protein sequence, read N- to C-terminus: rRNA methyltransferase (299 aa).

The tract at residues 14-53 (AEKRSGRGRMAAARTTGAQSRKTAQRSGRSEADRRRRVHG) is disordered. Low complexity predominate over residues 21-31 (GRMAAARTTGA). S-adenosyl-L-methionine contacts are provided by Asn55, Leu57, Gly82, Glu103, Asp128, and Asn144.

The protein belongs to the class I-like SAM-binding methyltransferase superfamily. rRNA adenine N(6)-methyltransferase family.

Functionally, probable RNA methylase. Confers resistance to carbomycin and several other macrolides, lincomycin and vernamycin B, but not to all macrolide-lincosamide-streptogramin B antibiotics. The protein is rRNA methyltransferase (carB) of Streptomyces thermotolerans.